We begin with the raw amino-acid sequence, 217 residues long: UPF0502 protein AHA_2872 (217 aa).

It belongs to the UPF0502 family.

This Aeromonas hydrophila subsp. hydrophila (strain ATCC 7966 / DSM 30187 / BCRC 13018 / CCUG 14551 / JCM 1027 / KCTC 2358 / NCIMB 9240 / NCTC 8049) protein is UPF0502 protein AHA_2872.